We begin with the raw amino-acid sequence, 815 residues long: DNA replication licensing factor Mcm6 (815 aa).

Residues 152–179 (CLDCQTEIRNVEQQFKFTNPTICRNPVC) form a C4-type zinc finger. The MCM domain maps to 338–544 (LYQNLITCLF…VVDYAIARKI (207 aa)). ATP is bound by residues Ser391, Thr392, Ala393, Lys394, Ser395, and Asn496. An Arginine finger motif is present at residues 520-523 (SRFD). The ADP site is built by Arg611 and Glu614. The tract at residues 672–693 (DDIDMENNGSAANTETDTLDTS) is disordered. Over residues 678 to 693 (NNGSAANTETDTLDTS) the composition is skewed to polar residues.

This sequence belongs to the MCM family. In terms of assembly, component of the Mcm2-7 complex. The complex forms a toroidal hexameric ring with the proposed subunit order Mcm2-Mcm6-Mcm4-Mcm7-Mcm3-Mcm5. The heterodimers of mcm4/mcm6 and mcm3/mcm5 interact with mcm2 and mcm7.

Its subcellular location is the nucleus. The catalysed reaction is ATP + H2O = ADP + phosphate + H(+). In terms of biological role, acts as a component of the Mcm2-7 complex (Mcm complex) which is the putative replicative helicase essential for 'once per cell cycle' DNA replication initiation and elongation in eukaryotic cells. Core component of CDC45-MCM-GINS (CMG) helicase, the molecular machine that unwinds template DNA during replication, and around which the replisome is built. The active ATPase sites in the Mcm2-7 ring are formed through the interaction surfaces of two neighboring subunits such that a critical structure of a conserved arginine finger motif is provided in trans relative to the ATP-binding site of the Walker A box of the adjacent subunit. The six ATPase active sites, however, are likely to contribute differentially to the complex helicase activity Required for DNA replication and cell proliferation. Required for mitotic cycles, endocycles, and the special S phase associated with the amplification of chorion genes; has a role in origin unwinding or fork elongation at chorion loci. Functionally, acts as a component of the MCM2-7 complex (MCM complex) which is the replicative helicase essential for 'once per cell cycle' DNA replication initiation and elongation in eukaryotic cells. Core component of CDC45-MCM-GINS (CMG) helicase, the molecular machine that unwinds template DNA during replication, and around which the replisome is built. The active ATPase sites in the MCM2-7 ring are formed through the interaction surfaces of two neighboring subunits such that a critical structure of a conserved arginine finger motif is provided in trans relative to the ATP-binding site of the Walker A box of the adjacent subunit. The six ATPase active sites, however, are likely to contribute differentially to the complex helicase activity. The protein is DNA replication licensing factor Mcm6 (Mcm6) of Drosophila pseudoobscura pseudoobscura (Fruit fly).